We begin with the raw amino-acid sequence, 870 residues long: S-linalool synthase (870 aa).

Residues Asp-547, Asp-551, Asn-689, Ser-693, and Glu-697 each contribute to the Mg(2+) site. Positions 547 to 551 match the DDXXD motif motif; the sequence is DDFFD.

The protein belongs to the terpene synthase family. It depends on Mg(2+) as a cofactor. Mn(2+) is required as a cofactor. In terms of tissue distribution, highly expressed in cells of the transmitting tract of the stigma and style and in the epidermal cells of petals, as well as in stamens.

The enzyme catalyses (2E)-geranyl diphosphate + H2O = (S)-linalool + diphosphate. In terms of biological role, involved in the biosynthesis of the acyclic monoterpene S-linalool, a major component of the strong sweet scent of the C.breweri flowers. The chain is S-linalool synthase (LIS) from Clarkia breweri (Fairy fans).